A 365-amino-acid chain; its full sequence is Peptide chain release factor 2 (365 aa).

Gln251 carries the N5-methylglutamine modification.

This sequence belongs to the prokaryotic/mitochondrial release factor family. Post-translationally, methylated by PrmC. Methylation increases the termination efficiency of RF2.

It localises to the cytoplasm. Peptide chain release factor 2 directs the termination of translation in response to the peptide chain termination codons UGA and UAA. In Campylobacter jejuni (strain RM1221), this protein is Peptide chain release factor 2.